The chain runs to 170 residues: Acireductone dioxygenase (170 aa).

Histidine 99, histidine 101, glutamate 105, and histidine 144 together coordinate Fe(2+). Ni(2+) is bound by residues histidine 99, histidine 101, glutamate 105, and histidine 144.

It belongs to the acireductone dioxygenase (ARD) family. In terms of assembly, monomer. The cofactor is Fe(2+). Requires Ni(2+) as cofactor.

The enzyme catalyses 1,2-dihydroxy-5-(methylsulfanyl)pent-1-en-3-one + O2 = 3-(methylsulfanyl)propanoate + CO + formate + 2 H(+). It carries out the reaction 1,2-dihydroxy-5-(methylsulfanyl)pent-1-en-3-one + O2 = 4-methylsulfanyl-2-oxobutanoate + formate + 2 H(+). It functions in the pathway amino-acid biosynthesis; L-methionine biosynthesis via salvage pathway; L-methionine from S-methyl-5-thio-alpha-D-ribose 1-phosphate: step 5/6. Catalyzes 2 different reactions between oxygen and the acireductone 1,2-dihydroxy-3-keto-5-methylthiopentene (DHK-MTPene) depending upon the metal bound in the active site. Fe-containing acireductone dioxygenase (Fe-ARD) produces formate and 2-keto-4-methylthiobutyrate (KMTB), the alpha-ketoacid precursor of methionine in the methionine recycle pathway. Ni-containing acireductone dioxygenase (Ni-ARD) produces methylthiopropionate, carbon monoxide and formate, and does not lie on the methionine recycle pathway. The chain is Acireductone dioxygenase from Bacillus cereus (strain ATCC 10987 / NRS 248).